Here is a 204-residue protein sequence, read N- to C-terminus: Probable calcium-binding protein CML46 (204 aa).

EF-hand domains lie at 72-106 (LEFQ…LGLS), 132-167 (PSLE…LGLK), and 170-204 (SNLE…NNFC). Ca(2+)-binding residues include Asp-145, Asn-147, Asp-149, and Asp-156.

Potential calcium sensor. In Arabidopsis thaliana (Mouse-ear cress), this protein is Probable calcium-binding protein CML46.